A 134-amino-acid chain; its full sequence is S-adenosylmethionine decarboxylase proenzyme (134 aa).

Catalysis depends on Ser64, which acts as the Schiff-base intermediate with substrate; via pyruvic acid. Ser64 carries the post-translational modification Pyruvic acid (Ser); by autocatalysis. His69 functions as the Proton acceptor; for processing activity in the catalytic mechanism. Residue Cys84 is the Proton donor; for catalytic activity of the active site.

Belongs to the prokaryotic AdoMetDC family. Type 1 subfamily. Heterotetramer of two alpha and two beta chains arranged as a dimer of alpha/beta heterodimers. Pyruvate serves as cofactor. Is synthesized initially as an inactive proenzyme. Formation of the active enzyme involves a self-maturation process in which the active site pyruvoyl group is generated from an internal serine residue via an autocatalytic post-translational modification. Two non-identical subunits are generated from the proenzyme in this reaction, and the pyruvate is formed at the N-terminus of the alpha chain, which is derived from the carboxyl end of the proenzyme. The post-translation cleavage follows an unusual pathway, termed non-hydrolytic serinolysis, in which the side chain hydroxyl group of the serine supplies its oxygen atom to form the C-terminus of the beta chain, while the remainder of the serine residue undergoes an oxidative deamination to produce ammonia and the pyruvoyl group blocking the N-terminus of the alpha chain.

It catalyses the reaction S-adenosyl-L-methionine + H(+) = S-adenosyl 3-(methylsulfanyl)propylamine + CO2. Its pathway is amine and polyamine biosynthesis; S-adenosylmethioninamine biosynthesis; S-adenosylmethioninamine from S-adenosyl-L-methionine: step 1/1. Catalyzes the decarboxylation of S-adenosylmethionine to S-adenosylmethioninamine (dcAdoMet), the propylamine donor required for the synthesis of the polyamines spermine and spermidine from the diamine putrescine. This is S-adenosylmethionine decarboxylase proenzyme from Hydrogenobaculum sp. (strain Y04AAS1).